Consider the following 216-residue polypeptide: Redox-sensing transcriptional repressor Rex (216 aa).

The segment at residues 20–59 (QYYRLFKSLVEENVTRTNSQLISEKIGVDAATIRRDFSLF) is a DNA-binding region (H-T-H motif). Residue 94–99 (GVGNLG) participates in NAD(+) binding.

The protein belongs to the transcriptional regulatory Rex family. Homodimer.

Its subcellular location is the cytoplasm. In terms of biological role, modulates transcription in response to changes in cellular NADH/NAD(+) redox state. This chain is Redox-sensing transcriptional repressor Rex, found in Lactococcus lactis subsp. lactis (strain IL1403) (Streptococcus lactis).